Reading from the N-terminus, the 106-residue chain is Iron-sulfur cluster assembly protein CyaY (106 aa).

It belongs to the frataxin family.

Its function is as follows. Involved in iron-sulfur (Fe-S) cluster assembly. May act as a regulator of Fe-S biogenesis. This Serratia proteamaculans (strain 568) protein is Iron-sulfur cluster assembly protein CyaY.